Reading from the N-terminus, the 225-residue chain is Probable GTP-binding protein EngB (225 aa).

The EngB-type G domain maps to 31-204 (VGVEIAFAGR…LGILDSWCKP (174 aa)). Residues 39-46 (GRSNAGKS), 65-69 (GRTQL), 83-86 (DLPG), 150-153 (TKAD), and 183-185 (FSS) each bind GTP. Mg(2+) is bound by residues Ser46 and Thr67.

The protein belongs to the TRAFAC class TrmE-Era-EngA-EngB-Septin-like GTPase superfamily. EngB GTPase family. Mg(2+) serves as cofactor.

In terms of biological role, necessary for normal cell division and for the maintenance of normal septation. The sequence is that of Probable GTP-binding protein EngB from Shewanella pealeana (strain ATCC 700345 / ANG-SQ1).